We begin with the raw amino-acid sequence, 734 residues long: Transcriptional regulator AacuB (734 aa).

The segment at residues 26 to 52 (CVLCQQRKIKCDRTFPCTNCVRAHVQC) is a DNA-binding region (zn(2)-C6 fungal-type). The segment covering 86 to 107 (FDPLHTPTADHRSASDDGRDDL) has biased composition (basic and acidic residues). Residues 86 to 122 (FDPLHTPTADHRSASDDGRDDLPEGAESEGTFGEREK) are disordered.

Its subcellular location is the nucleus. Its function is as follows. Transcriptional regulator; part of the gene cluster that mediates the biosynthesis of the tetrahydroxanthone dimer secalonic acid D. In Aspergillus aculeatus (strain ATCC 16872 / CBS 172.66 / WB 5094), this protein is Transcriptional regulator AacuB.